Here is an 88-residue protein sequence, read N- to C-terminus: Small ribosomal subunit protein bS20 (88 aa).

It belongs to the bacterial ribosomal protein bS20 family.

Its function is as follows. Binds directly to 16S ribosomal RNA. The sequence is that of Small ribosomal subunit protein bS20 from Desulforamulus reducens (strain ATCC BAA-1160 / DSM 100696 / MI-1) (Desulfotomaculum reducens).